The sequence spans 89 residues: Small ribosomal subunit protein uS15 (89 aa).

Belongs to the universal ribosomal protein uS15 family. Part of the 30S ribosomal subunit. Forms a bridge to the 50S subunit in the 70S ribosome, contacting the 23S rRNA.

One of the primary rRNA binding proteins, it binds directly to 16S rRNA where it helps nucleate assembly of the platform of the 30S subunit by binding and bridging several RNA helices of the 16S rRNA. Functionally, forms an intersubunit bridge (bridge B4) with the 23S rRNA of the 50S subunit in the ribosome. This chain is Small ribosomal subunit protein uS15, found in Brevibacillus brevis (strain 47 / JCM 6285 / NBRC 100599).